The sequence spans 163 residues: Nucleotide-binding protein PM1656 (163 aa).

This sequence belongs to the YajQ family.

Functionally, nucleotide-binding protein. This chain is Nucleotide-binding protein PM1656, found in Pasteurella multocida (strain Pm70).